The sequence spans 226 residues: Sugar fermentation stimulation protein homolog (226 aa).

Belongs to the SfsA family.

This Ruminiclostridium cellulolyticum (strain ATCC 35319 / DSM 5812 / JCM 6584 / H10) (Clostridium cellulolyticum) protein is Sugar fermentation stimulation protein homolog.